Consider the following 1157-residue polypeptide: uncharacterized protein (1157 aa).

Over residues 1–10 the composition is skewed to basic and acidic residues; that stretch reads MDPHWKRHDS. Disordered regions lie at residues 1 to 35, 159 to 233, and 478 to 498; these read MDPHWKRHDSSNIPTQPSPSASPKSNKPSSAQRFG, QTTP…SVEP, and KNQSSHRRNSSTSSGETGKGP. 2 stretches are compositionally biased toward low complexity: residues 18 to 31 and 181 to 197; these read SPSASPKSNKPSSA and SAGTDPFSPVSPSNPNF. Positions 208 to 228 are enriched in polar residues; it reads QEWQQSPLESPLSMHSLQESL. Positions 501-574 constitute a CSD2 domain; the sequence is VWFKPSDKRI…KVEYKAILHD (74 aa). The RNB domain maps to 608 to 921; sequence LRDKLTFMIG…ICVQRQLREA (314 aa). The DIS3L2 C-terminal domain occupies 973 to 1030; the sequence is GLVKHKAFVLAVDQEYIDIVIYEFGLERRISLDLLPLSNCDFNEQKHELYLSWRTNAS. Residues 1084–1113 are disordered; sequence YSKARGNDSTSKTAKSSSGNQDISGDGKLH. A compositionally biased stretch (polar residues) spans 1090–1106; that stretch reads NDSTSKTAKSSSGNQDI.

It belongs to the RNR ribonuclease family.

The protein localises to the cytoplasm. This is an uncharacterized protein from Schizosaccharomyces pombe (strain 972 / ATCC 24843) (Fission yeast).